The sequence spans 2110 residues: Protein Ycf2 (2110 aa).

A disordered region spans residues D190–S209. G1442–S1449 is a binding site for ATP.

This sequence belongs to the Ycf2 family.

The protein localises to the plastid. It is found in the chloroplast stroma. Functionally, probable ATPase of unknown function. Its presence in a non-photosynthetic plant (Epifagus virginiana) and experiments in tobacco indicate that it has an essential function which is probably not related to photosynthesis. The chain is Protein Ycf2 from Panax ginseng (Korean ginseng).